Here is a 1915-residue protein sequence, read N- to C-terminus: Ankyrin repeat domain-containing protein 36A (1915 aa).

ANK repeat units lie at residues Y31–K60, K64–L93, E97–I126, F130–E159, C163–A192, and L196–S225. Disordered stretches follow at residues P261–K331, A470–S619, M639–D663, L676–S1203, and K1285–E1304. Polar residues-rich tracts occupy residues I262–Q272 and K297–Q306. Residues S505–L521 are compositionally biased toward low complexity. Composition is skewed to basic and acidic residues over residues P551–S562 and P585–S596. Composition is skewed to polar residues over residues V597 to S619 and G645 to A657. Composition is skewed to basic and acidic residues over residues R806–R815, R874–R883, S931–R951, R976–R985, R1044–R1053, T1100–R1121, and I1134–Q1152. Positions V1175–Q1196 are enriched in polar residues. 4 coiled-coil regions span residues I1383–Q1466, K1504–Q1531, L1573–D1614, and N1727–D1814. Positions K1489 to L1508 are disordered.

The protein belongs to the ANKRD36 family.

The sequence is that of Ankyrin repeat domain-containing protein 36A (ANKRD36) from Homo sapiens (Human).